A 209-amino-acid polypeptide reads, in one-letter code: Thymidine kinase (209 aa).

ATP contacts are provided by residues 25–32 and 103–106; these read GCMFAGKT and DEVQ. The active-site Proton acceptor is the Glu-104. Residues Cys-160, Cys-163, Cys-198, and Cys-201 each contribute to the Zn(2+) site.

This sequence belongs to the thymidine kinase family. As to quaternary structure, homotetramer.

The protein localises to the cytoplasm. It carries out the reaction thymidine + ATP = dTMP + ADP + H(+). This chain is Thymidine kinase, found in Mycoplasma mycoides subsp. mycoides SC (strain CCUG 32753 / NCTC 10114 / PG1).